Consider the following 365-residue polypeptide: Protein RecA (365 aa).

76 to 83 (GPESSGKT) lines the ATP pocket. A disordered region spans residues 346 to 365 (DVPGSERDGDEDAGDMEASA). Residues 353–365 (DGDEDAGDMEASA) show a composition bias toward acidic residues.

This sequence belongs to the RecA family.

Its subcellular location is the cytoplasm. In terms of biological role, can catalyze the hydrolysis of ATP in the presence of single-stranded DNA, the ATP-dependent uptake of single-stranded DNA by duplex DNA, and the ATP-dependent hybridization of homologous single-stranded DNAs. It interacts with LexA causing its activation and leading to its autocatalytic cleavage. This chain is Protein RecA, found in Parvibaculum lavamentivorans (strain DS-1 / DSM 13023 / NCIMB 13966).